A 78-amino-acid chain; its full sequence is Large ribosomal subunit protein bL28 (78 aa).

It belongs to the bacterial ribosomal protein bL28 family.

This Xylella fastidiosa (strain 9a5c) protein is Large ribosomal subunit protein bL28 (rpmB).